The following is a 644-amino-acid chain: 3D-(3,5/4)-trihydroxycyclohexane-1,2-dione hydrolase (644 aa).

Position 65 (Glu65) interacts with thiamine diphosphate. A thiamine pyrophosphate binding region spans residues 442 to 522 (SLPGDLHKVW…INILLFDNAG (81 aa)). Mg(2+)-binding residues include Asp493 and Asn520.

The protein belongs to the TPP enzyme family. Mg(2+) is required as a cofactor. Requires thiamine diphosphate as cofactor.

It carries out the reaction 3D-3,5/4-trihydroxycyclohexane-1,2-dione + H2O = 5-deoxy-D-glucuronate + H(+). It functions in the pathway polyol metabolism; myo-inositol degradation into acetyl-CoA; acetyl-CoA from myo-inositol: step 3/7. Functionally, involved in the cleavage of the C1-C2 bond of 3D-(3,5/4)-trihydroxycyclohexane-1,2-dione (THcHDO) to yield 5-deoxy-glucuronate (5DG). The protein is 3D-(3,5/4)-trihydroxycyclohexane-1,2-dione hydrolase of Clostridium tetani (strain Massachusetts / E88).